We begin with the raw amino-acid sequence, 280 residues long: Fructose-1,6-bisphosphatase class 1 (280 aa).

E64, D83, L85, and D86 together coordinate Mg(2+). Substrate contacts are provided by residues 86-89 (DGSS), Y189, and K220. E226 serves as a coordination point for Mg(2+).

Belongs to the FBPase class 1 family. In terms of assembly, homotetramer. Requires Mg(2+) as cofactor.

Its subcellular location is the cytoplasm. It carries out the reaction beta-D-fructose 1,6-bisphosphate + H2O = beta-D-fructose 6-phosphate + phosphate. The protein operates within carbohydrate biosynthesis; gluconeogenesis. This Campylobacter jejuni subsp. jejuni serotype O:23/36 (strain 81-176) protein is Fructose-1,6-bisphosphatase class 1.